The chain runs to 242 residues: HTH-type transcriptional regulator GadW (242 aa).

Residues 139–236 form the HTH araC/xylS-type domain; sequence GKVERLISFD…GVTPHQFAQH (98 aa). 2 consecutive DNA-binding regions (H-T-H motif) follow at residues 156–177 and 203–226; these read RDIA…QDEN and LHTI…RQYY.

In terms of assembly, homodimer.

Its function is as follows. Depending on the conditions (growth phase and medium), acts as a positive or negative regulator of gadA and gadBC. Repression occurs directly or via the repression of the expression of gadX. Activation occurs directly by the binding of GadW to the gadA and gadBC promoters. The sequence is that of HTH-type transcriptional regulator GadW (gadW) from Escherichia coli (strain K12).